The sequence spans 103 residues: Histone H4 (103 aa).

Over residues 1–14 (MSGRGKGGKGLGKG) the composition is skewed to gly residues. Positions 1 to 20 (MSGRGKGGKGLGKGGAKRHR) are disordered. Lys6 carries the post-translational modification N6-acetyl-N6-methyllysine; alternate. 3 positions are modified to N6-acetyllysine; alternate: Lys6, Lys9, and Lys13. Residues Lys6, Lys9, and Lys13 each carry the N6-methyllysine; alternate modification. N6-butyryllysine; alternate is present on residues Lys9 and Lys13. Lys13 carries the N6-acetyl-N6-methyllysine; alternate modification. Lys17 carries the post-translational modification N6-acetyllysine. Residues 17-21 (KRHRK) mediate DNA binding. Lys32 bears the N6-succinyllysine mark. Arg56 bears the Omega-N-methylarginine mark. Phosphoserine occurs at positions 61 and 65. An N6-succinyllysine modification is found at Lys78. An N6-acetyllysine modification is found at Lys80. The residue at position 92 (Lys92) is an N6-glutaryllysine.

The protein belongs to the histone H4 family. The nucleosome is a histone octamer containing two molecules each of H2A, H2B, H3 and H4 assembled in one H3-H4 heterotetramer and two H2A-H2B heterodimers. The octamer wraps approximately 147 bp of DNA. Histone H4 is a component of the UAF (upstream activation factor) complex which consists of UAF30, RRN5, RRN9, RRN10, and histones H3 and H4. Glutarylation at Lys-92 (H4K91glu) destabilizes nucleosomes by promoting dissociation of the H2A-H2B dimers from nucleosomes.

It is found in the nucleus. The protein resides in the chromosome. Its function is as follows. Core component of nucleosome. Nucleosomes wrap and compact DNA into chromatin, limiting DNA accessibility to the cellular machineries which require DNA as a template. Histones thereby play a central role in transcription regulation, DNA repair, DNA replication and chromosomal stability. DNA accessibility is regulated via a complex set of post-translational modifications of histones, also called histone code, and nucleosome remodeling. Component of the UAF (upstream activation factor) complex which interacts with the upstream element of the RNA polymerase I promoter and forms a stable preinitiation complex. Together with SPT15/TBP UAF seems to stimulate basal transcription to a fully activated level. The chain is Histone H4 (HHF1) from Saccharomyces cerevisiae (strain ATCC 204508 / S288c) (Baker's yeast).